We begin with the raw amino-acid sequence, 484 residues long: Calcium-dependent protein kinase 26 (484 aa).

The Protein kinase domain maps to 24–282 (YSLGHKLGQG…AHQVLRHPWI (259 aa)). ATP-binding positions include 30–38 (LGQGQFGTT) and Lys-53. Asp-148 acts as the Proton acceptor in catalysis. A Phosphoserine modification is found at Ser-188. An autoinhibitory domain region spans residues 288 to 318 (APDRALDPAVLSRLKQFSAMNKLKQMALRVI). 4 consecutive EF-hand domains span residues 325–360 (EEIA…YGST), 361–396 (LKDT…LNKL), 397–432 (EREE…QGMS), and 436–466 (LEDV…GIVG). Ca(2+) is bound by residues Asp-338, Asp-340, Ser-342, Glu-349, Asp-374, Asp-376, Ser-378, Thr-380, Glu-385, Asp-410, Asp-412, Ser-414, Tyr-416, Glu-421, Asp-444, Asp-446, Asp-448, Arg-450, and Glu-455.

Belongs to the protein kinase superfamily. Ser/Thr protein kinase family. CDPK subfamily.

The catalysed reaction is L-seryl-[protein] + ATP = O-phospho-L-seryl-[protein] + ADP + H(+). It catalyses the reaction L-threonyl-[protein] + ATP = O-phospho-L-threonyl-[protein] + ADP + H(+). Activated by calcium. Autophosphorylation may play an important role in the regulation of the kinase activity. Functionally, may play a role in signal transduction pathways that involve calcium as a second messenger. The protein is Calcium-dependent protein kinase 26 (CPK26) of Arabidopsis thaliana (Mouse-ear cress).